Consider the following 967-residue polypeptide: LRR receptor-like serine/threonine-protein kinase ERL2 (967 aa).

Residues 1-27 (MRRIETMKGLFFCLGMVVFMLLGSVSP) form the signal peptide. Residues 28-585 (MNNEGKALMA…SLPKSQVFTR (558 aa)) are Extracellular-facing. N-linked (GlcNAc...) asparagine glycosylation is found at Asn-70 and Asn-79. LRR repeat units follow at residues 74 to 97 (NVVS…GDLM), 98 to 120 (NLQS…IGNC), 122 to 145 (SLAY…SKLK), 146 to 166 (QLEF…ATLT), 170 to 192 (NLKT…LYWN), 194 to 216 (VLQY…MCQL), 218 to 240 (GLWY…IGNC), 242 to 261 (SFEI…PYNI), 265 to 287 (QVAT…IGLM), 289 to 311 (ALAV…LGNL), 313 to 335 (FTGK…LGNM), 337 to 359 (RLSY…LGKL), 361 to 382 (QLFE…NISS), 385 to 406 (ALNQ…EFRN), 409 to 431 (SLTY…LGHI), 433 to 456 (NLDT…GDLE), 457 to 479 (HLLI…FGNL), 481 to 503 (SIQI…LGQL), 505 to 527 (NINS…LTNC), and 529 to 550 (SLAN…MKNF). 2 N-linked (GlcNAc...) asparagine glycosylation sites follow: Asn-228 and Asn-239. Residues Asn-310 and Asn-334 are each glycosylated (N-linked (GlcNAc...) asparagine). Asn-379 carries an N-linked (GlcNAc...) asparagine glycan. Asn-414, Asn-443, Asn-462, and Asn-469 each carry an N-linked (GlcNAc...) asparagine glycan. Asn-534, Asn-539, and Asn-549 each carry an N-linked (GlcNAc...) asparagine glycan. A helical transmembrane segment spans residues 586–606 (VAVICMVLGFITLICMIFIAV). At 607–967 (YKSKQQKPVL…FREDISKSSL (361 aa)) the chain is on the cytoplasmic side. Thr-640 and Thr-648 each carry phosphothreonine. Positions 651–921 (LDEKYIIGYG…EVSRVLLSLV (271 aa)) constitute a Protein kinase domain. Residues 657–665 (IGYGASSTV) and Lys-679 each bind ATP. 2 positions are modified to phosphotyrosine: Tyr-724 and Tyr-763. Asp-776 (proton acceptor) is an active-site residue. Tyr-818 carries the phosphotyrosine modification. At Thr-826 the chain carries Phosphothreonine. The segment at 921–955 (VPSPPPKKLPSPAKVQEGEERRESHSSDTTTPQWF) is disordered. The segment covering 936 to 946 (QEGEERRESHS) has biased composition (basic and acidic residues).

The protein belongs to the protein kinase superfamily. Ser/Thr protein kinase family. In terms of tissue distribution, mostly expressed in developing organs, including bud clusters, flowers, siliques and young rosettes. Also detected in mature aboveground organs, such as leaves, stems and pedicels, but barely in roots.

It localises to the membrane. It catalyses the reaction L-seryl-[protein] + ATP = O-phospho-L-seryl-[protein] + ADP + H(+). The enzyme catalyses L-threonyl-[protein] + ATP = O-phospho-L-threonyl-[protein] + ADP + H(+). In terms of biological role, receptor kinase that regulates inflorescence architecture and organ shape as well as stomatal patterning, including density and clustering, together with ERL1 and ER. This is LRR receptor-like serine/threonine-protein kinase ERL2 (ERL2) from Arabidopsis thaliana (Mouse-ear cress).